Reading from the N-terminus, the 312-residue chain is Glyoxylate/hydroxypyruvate reductase A (312 aa).

Residue Arg-227 is part of the active site. His-275 acts as the Proton donor in catalysis.

This sequence belongs to the D-isomer specific 2-hydroxyacid dehydrogenase family. GhrA subfamily.

Its subcellular location is the cytoplasm. It carries out the reaction glycolate + NADP(+) = glyoxylate + NADPH + H(+). The enzyme catalyses (R)-glycerate + NAD(+) = 3-hydroxypyruvate + NADH + H(+). It catalyses the reaction (R)-glycerate + NADP(+) = 3-hydroxypyruvate + NADPH + H(+). Catalyzes the NADPH-dependent reduction of glyoxylate and hydroxypyruvate into glycolate and glycerate, respectively. In Escherichia coli O7:K1 (strain IAI39 / ExPEC), this protein is Glyoxylate/hydroxypyruvate reductase A.